Consider the following 964-residue polypeptide: Glycine dehydrogenase (decarboxylating) (964 aa).

The segment covering 1 to 11 (MNSTLQNQTKT) has biased composition (polar residues). The tract at residues 1–21 (MNSTLQNQTKTNLEKVGTDPL) is disordered. Lys-713 is subject to N6-(pyridoxal phosphate)lysine.

The protein belongs to the GcvP family. As to quaternary structure, the glycine cleavage system is composed of four proteins: P, T, L and H. The cofactor is pyridoxal 5'-phosphate.

The enzyme catalyses N(6)-[(R)-lipoyl]-L-lysyl-[glycine-cleavage complex H protein] + glycine + H(+) = N(6)-[(R)-S(8)-aminomethyldihydrolipoyl]-L-lysyl-[glycine-cleavage complex H protein] + CO2. Functionally, the glycine cleavage system catalyzes the degradation of glycine. The P protein binds the alpha-amino group of glycine through its pyridoxal phosphate cofactor; CO(2) is released and the remaining methylamine moiety is then transferred to the lipoamide cofactor of the H protein. In Leptospira interrogans serogroup Icterohaemorrhagiae serovar copenhageni (strain Fiocruz L1-130), this protein is Glycine dehydrogenase (decarboxylating).